Reading from the N-terminus, the 309-residue chain is Replication factor C subunit 4 (309 aa).

Residues V5, V17, 42–50, N134, and R192 contribute to the ATP site; that span reads GPPGTGKTT.

This sequence belongs to the activator 1 small subunits family. In terms of assembly, component of the replication factor C (RFC) complex.

The protein localises to the nucleus. In terms of biological role, component of ATP-dependent clamp loader (RFC and RFC-like) complexes for DNA clamps. During a clamp loading circle, the RFC:clamp complex binds to DNA and the recognition of the double-stranded/single-stranded junction stimulates ATP hydrolysis by RFC. The complex presumably provides bipartite ATP sites in which one subunit supplies a catalytic site for hydrolysis of ATP bound to the neighboring subunit. Dissociation of RFC from the clamp leaves the clamp encircling DNA. Component of the replication factor C (RFC or activator 1) complex which acts during elongation of primed DNA templates by DNA polymerase delta and epsilon. RFC has an essential but redundant activity in sister chromatid cohesion establishment. The chain is Replication factor C subunit 4 (RFC4) from Encephalitozoon cuniculi (strain GB-M1) (Microsporidian parasite).